An 838-amino-acid chain; its full sequence is Phosphatidylethanolamine N-methyltransferase 1 (838 aa).

Topologically, residues 1 to 48 are lumenal; that stretch reads MATEIITEKKEIVARTRSSGITFNPPVTHDMVRSLFDPTIKKSFLECC. Residues 49-69 form a helical membrane-spanning segment; it reads ITLTILANFVLCYYLINWFGL. Topologically, residues 70-73 are cytoplasmic; it reads SQAK. Residues 74-94 form a helical membrane-spanning segment; it reads LIFLIQYVYWRLAYNLGIGII. Topologically, residues 95 to 157 are lumenal; sequence LHYQSHYESL…ELNCWLLFRQ (63 aa). A helical membrane pass occupies residues 158-178; sequence FVDLILMQDFTTYIIYVYLSL. The Cytoplasmic portion of the chain corresponds to 179-184; sequence PTDVSS. Residues 185-205 form a helical membrane-spanning segment; sequence LINWKSLIGIAMILFNIWVKI. At 206 to 236 the chain is on the lumenal side; it reads DAHRVVKDYAWYWGDFFFLQDAELTFDGVFN. Residues 237 to 257 form a helical membrane-spanning segment; that stretch reads ISPHPMYSIGYLGYYGLSLIC. Topologically, residues 258 to 261 are cytoplasmic; that stretch reads GDYR. The helical transmembrane segment at 262–282 threads the bilayer; it reads VLLVSVGGHFLQFLFLKYVES. The Lumenal portion of the chain corresponds to 283-328; the sequence is PHIERTYGSDSPSNSTQHQIDDLIAKENYDYSRPLINTGILFENFQ. A helical transmembrane segment spans residues 329–349; sequence FLRFSDYFTVSTILVLFSWFF. The Cytoplasmic segment spans residues 350–356; sequence TSKPSNN. Residues 357–377 traverse the membrane as a helical segment; that stretch reads FLFVLTLLTKLTTWLLTSWIL. The Lumenal segment spans residues 378 to 403; that stretch reads FQQSNRKWFTRLFLKNGYTQIYSYQQ. A helical membrane pass occupies residues 404–424; the sequence is WQFLYNYSLIVTNTLLFLHTL. Topologically, residues 425–435 are cytoplasmic; the sequence is SELYSIQSSDG. Residues 436 to 456 form a helical membrane-spanning segment; that stretch reads LNNSHVIFGLLLCAIQIWCNV. Residues 457-517 lie on the Lumenal side of the membrane; sequence ETRDAISDFG…VLMTNFSKTN (61 aa). A helical membrane pass occupies residues 518-538; that stretch reads VTLAVLWTVTNLIFVKLIEEP. Over 539–838 the chain is Cytoplasmic; sequence HVSKVYGNGT…DIKEVLDSLN (300 aa).

Belongs to the class VI-like SAM-binding methyltransferase superfamily. CHO2 family.

The protein localises to the endoplasmic reticulum membrane. It carries out the reaction a 1,2-diacyl-sn-glycero-3-phosphoethanolamine + S-adenosyl-L-methionine = a 1,2-diacyl-sn-glycero-3-phospho-N-methylethanolamine + S-adenosyl-L-homocysteine + H(+). It participates in phospholipid metabolism; phosphatidylcholine biosynthesis. Functionally, catalyzes the first step of the methylation pathway of phosphatidylcholine biosynthesis, the SAM-dependent methylation of phosphatidylethanolamine (PE) to phosphatidylmonomethylethanolamine (PMME). The polypeptide is Phosphatidylethanolamine N-methyltransferase 1 (CHO2-1) (Vanderwaltozyma polyspora (strain ATCC 22028 / DSM 70294 / BCRC 21397 / CBS 2163 / NBRC 10782 / NRRL Y-8283 / UCD 57-17) (Kluyveromyces polysporus)).